The sequence spans 138 residues: Small ribosomal subunit protein uS11c (138 aa).

Belongs to the universal ribosomal protein uS11 family. As to quaternary structure, part of the 30S ribosomal subunit.

The protein localises to the plastid. The protein resides in the chloroplast. This chain is Small ribosomal subunit protein uS11c, found in Acorus calamus (Sweet flag).